An 82-amino-acid polypeptide reads, in one-letter code: Sulfur carrier protein TusA (82 aa).

Catalysis depends on cysteine 19, which acts as the Cysteine persulfide intermediate.

It belongs to the sulfur carrier protein TusA family.

It is found in the cytoplasm. Sulfur carrier protein which probably makes part of a sulfur-relay system. This chain is Sulfur carrier protein TusA, found in Vibrio campbellii (strain ATCC BAA-1116).